The chain runs to 445 residues: Trigger factor (445 aa).

One can recognise a PPIase FKBP-type domain in the interval 171–256 (NDIVIIDFKG…VHVVNEVETP (86 aa)).

The protein belongs to the FKBP-type PPIase family. Tig subfamily.

It localises to the cytoplasm. It carries out the reaction [protein]-peptidylproline (omega=180) = [protein]-peptidylproline (omega=0). Functionally, involved in protein export. Acts as a chaperone by maintaining the newly synthesized protein in an open conformation. Functions as a peptidyl-prolyl cis-trans isomerase. In Malacoplasma penetrans (strain HF-2) (Mycoplasma penetrans), this protein is Trigger factor.